Here is a 178-residue protein sequence, read N- to C-terminus: Inorganic pyrophosphatase (178 aa).

Positions 31, 45, and 57 each coordinate substrate. Residues D67, D72, and D104 each contribute to the Mg(2+) site. Y141 provides a ligand contact to substrate.

It belongs to the PPase family. In terms of assembly, homohexamer. The cofactor is Mg(2+).

The protein resides in the cytoplasm. It catalyses the reaction diphosphate + H2O = 2 phosphate + H(+). Its function is as follows. Catalyzes the hydrolysis of inorganic pyrophosphate (PPi) forming two phosphate ions. The protein is Inorganic pyrophosphatase of Leptospira interrogans serogroup Icterohaemorrhagiae serovar copenhageni (strain Fiocruz L1-130).